We begin with the raw amino-acid sequence, 213 residues long: Redox-sensing transcriptional repressor Rex (213 aa).

A DNA-binding region (H-T-H motif) is located at residues 18 to 57; the sequence is LYYRFVNTLKSKGIDRVNSKAISEGLNIDSATIRRDFSYF. Residue 92 to 97 coordinates NAD(+); that stretch reads GVGNLG.

This sequence belongs to the transcriptional regulatory Rex family. As to quaternary structure, homodimer.

Its subcellular location is the cytoplasm. Its function is as follows. Modulates transcription in response to changes in cellular NADH/NAD(+) redox state. The sequence is that of Redox-sensing transcriptional repressor Rex from Staphylococcus saprophyticus subsp. saprophyticus (strain ATCC 15305 / DSM 20229 / NCIMB 8711 / NCTC 7292 / S-41).